Consider the following 305-residue polypeptide: MNLSSVYVLASLAVVCLLVKETQAEYLCGSTLADVLSFVCGNRGYNSQPRRSVSKRAIDFISEQQAKDYMGAMPHIRRRRGLVEECCYNVCDYSQLESYCNPYSTAPATATPVRTTEPQPEEAEDDPLDGMVGDQAPLGSIENIENLVYHYDSDDITIDAAKMEPKKLKEILGSFEDKKANPVFPFIRQSKNIKPNKFPDSFAHQFPTDLVEEEPTNEIPESPSQKPTLERLGYKHNQTDKKEPTENNNNNNRARDNRTKSSTVEPHTVPDYISKQYTHKPLITLPRGTPRRIESRDSYHLTELR.

The signal sequence occupies residues 1–22 (MNLSSVYVLASLAVVCLLVKET). Cystine bridges form between Cys-28-Cys-87, Cys-40-Cys-100, and Cys-86-Cys-91. A propeptide spans 52-76 (SVSKRAIDFISEQQAKDYMGAMPHI) (connecting peptide). Residues 102–114 (PYSTAPATATPVR) form a d region. Residues 102 to 305 (PYSTAPATAT…RDSYHLTELR (204 aa)) constitute a propeptide, d/E peptide. The span at 107–118 (PATATPVRTTEP) shows a compositional bias: low complexity. 2 disordered regions span residues 107 to 130 (PATATPVRTTEPQPEEAEDDPLDG) and 236 to 305 (HNQT…TELR). Positions 115-305 (TTEPQPEEAE…RDSYHLTELR (191 aa)) are e. Residues 119 to 128 (QPEEAEDDPL) are compositionally biased toward acidic residues. 2 stretches are compositionally biased toward basic and acidic residues: residues 236–245 (HNQTDKKEPT) and 291–305 (RRIESRDSYHLTELR).

Belongs to the insulin family.

The protein resides in the secreted. This is Insulin-like peptide (ILP) from Branchiostoma californiense (California lancelet).